A 636-amino-acid polypeptide reads, in one-letter code: Receptor-like kinase LIP1 (636 aa).

A disordered region spans residues 18–57; it reads NAPCTTNETNDDNVEHDEFRPPVVATTKRTEEREPAEQQP. One can recognise a Protein kinase domain in the interval 74–352; sequence FRQECLLGEG…SDVMVALSFL (279 aa). Residues 80–88 and lysine 103 contribute to the ATP site; that span reads LGEGGFGRV. The Proton acceptor role is filled by aspartate 201. A phosphoserine mark is found at serine 205 and serine 236. Threonine 242 carries the phosphothreonine modification. A Phosphotyrosine modification is found at tyrosine 250. The segment at 389–636 is disordered; that stretch reads FCISRKDVGN…EEEHISSDHD (248 aa). The stretch at 403–434 forms a coiled coil; that stretch reads SSDSEDEEEEKEQKAEKEEESTSKKRQEQEET. A compositionally biased stretch (basic and acidic residues) spans 413–431; that stretch reads KEQKAEKEEESTSKKRQEQ. Residues 432 to 455 show a composition bias toward acidic residues; the sequence is EETATDSDDESDSNSEKDQEEEQS. A compositionally biased stretch (polar residues) spans 480 to 489; that stretch reads TNATAQSLKI. 2 stretches are compositionally biased toward basic and acidic residues: residues 522–531 and 554–566; these read DSGRDHDDSS and HETRSYSDHDDSP. Positions 567-576 are enriched in polar residues; that stretch reads RNTSMRINSL. Basic and acidic residues-rich tracts occupy residues 588 to 603 and 619 to 636; these read NHQTRLEHIHSSKSED and SLHRIEAKEEEHISSDHD.

Belongs to the protein kinase superfamily. Ser/Thr protein kinase family. Interacts with PRK6. Post-translationally, palmitoylated. Expressed in mature pollen and in germinating pollen tubes.

The protein localises to the cell membrane. It is found in the cytoplasm. Involved in pollen tube guidance into micropyle. Participates in perception of the ovule-secreted peptide signal LURE1. The polypeptide is Receptor-like kinase LIP1 (Arabidopsis thaliana (Mouse-ear cress)).